The following is a 377-amino-acid chain: tRNA(Met) cytidine acetate ligase (377 aa).

ATP is bound by residues 7 to 20, G101, N151, and R176; that span reads VVEY…HRYH.

It belongs to the TmcAL family.

It is found in the cytoplasm. The catalysed reaction is cytidine(34) in elongator tRNA(Met) + acetate + ATP = N(4)-acetylcytidine(34) in elongator tRNA(Met) + AMP + diphosphate. In terms of biological role, catalyzes the formation of N(4)-acetylcytidine (ac(4)C) at the wobble position of elongator tRNA(Met), using acetate and ATP as substrates. First activates an acetate ion to form acetyladenylate (Ac-AMP) and then transfers the acetyl group to tRNA to form ac(4)C34. This chain is tRNA(Met) cytidine acetate ligase, found in Limosilactobacillus reuteri (strain DSM 20016) (Lactobacillus reuteri).